Consider the following 595-residue polypeptide: Phytoene desaturase (595 aa).

An N-terminal signal peptide occupies residues 1-23 (MAETQRPRSAIIVGAGAGGIAVA). A helical transmembrane segment spans residues 574–594 (SQRAFPLLVALMGVLYFLLFV).

This sequence belongs to the carotenoid/retinoid oxidoreductase family. It depends on NAD(+) as a cofactor.

It localises to the membrane. It carries out the reaction 15-cis-phytoene + A = all-trans-phytofluene + AH2. The enzyme catalyses all-trans-phytofluene + A = all-trans-zeta-carotene + AH2. The catalysed reaction is all-trans-zeta-carotene + A = all-trans-neurosporene + AH2. It catalyses the reaction all-trans-neurosporene + A = all-trans-lycopene + AH2. It carries out the reaction all-trans-lycopene + A = all-trans-3,4-didehydrolycopene + AH2. It functions in the pathway carotenoid biosynthesis; lycopene biosynthesis. Functionally, phytoene desaturase involved in the carotenoid biosynthesis pathway. Converts phytoene into 3,4-didehydrolycopene via the intermediates phytofluene, zeta-carotene, neurosporene and lycopene, by introducing up to five double bonds into phytoene. Is also able to desaturate 1-hydroxyneurosporene into 1-hydroxylycopene and 1-hydroxylycopene into 1-hydroxy-3,4-didehydrolycopene. Gamma-carotene and 1,19-dihydroxylycopene are not accepted as substrates. Neurosporaxanthin is synthesized from geranyl-geranyl pyrophosphate (GGPP) through several enzymatic activities. Phytoene synthase activity performed by the bifunctional enzyme al-2 first produces phytoene from geranyl-geranyl pyrophosphate (GGPP). The phytoene dehydrogenase al-1 then introduces 5 desaturations to lead to 3,4-didehydrolycopene via the intermediates phytofluene, zeta-carotene, neurosporene and lycopene. Al-2 cyclase activity then converts 3,4-didehydrolycopene into torulene. Al-2 can also convet lycopene into gamma-carotene which in turn is converted to beta-carotene by an additional al-2 cyclization reaction. Torulene is the substrate of the dioxidase cao-2 that breaks the molecule, removing five carbon atoms to yield beta-apo-4'-carotenal, whereas the aldehyde dehydrogenase ylo-1 mediates the last step by converting beta-apo-4'-carotenal into neurosporaxanthin. This chain is Phytoene desaturase, found in Neurospora crassa (strain ATCC 24698 / 74-OR23-1A / CBS 708.71 / DSM 1257 / FGSC 987).